The following is a 484-amino-acid chain: Trigger factor (484 aa).

The PPIase FKBP-type domain occupies 162–243; that stretch reads GDFISIDLSA…VKSVKERELP (82 aa). The disordered stretch occupies residues 427–484; sequence DGNTIDTSEFFGKPPENDVTDLLDDDADGDAGVDADGDTENSAEPADADSADTAQGAG. Residues 444–476 show a composition bias toward acidic residues; that stretch reads DVTDLLDDDADGDAGVDADGDTENSAEPADADS.

This sequence belongs to the FKBP-type PPIase family. Tig subfamily.

The protein resides in the cytoplasm. The enzyme catalyses [protein]-peptidylproline (omega=180) = [protein]-peptidylproline (omega=0). Its function is as follows. Involved in protein export. Acts as a chaperone by maintaining the newly synthesized protein in an open conformation. Functions as a peptidyl-prolyl cis-trans isomerase. This Mycobacterium ulcerans (strain Agy99) protein is Trigger factor.